The following is a 171-amino-acid chain: Protein GrpE (171 aa).

Positions 1–20 (MNEEKEESPSTEAEGAGAEV) are disordered.

This sequence belongs to the GrpE family. In terms of assembly, homodimer.

Its subcellular location is the cytoplasm. Participates actively in the response to hyperosmotic and heat shock by preventing the aggregation of stress-denatured proteins, in association with DnaK and GrpE. It is the nucleotide exchange factor for DnaK and may function as a thermosensor. Unfolded proteins bind initially to DnaJ; upon interaction with the DnaJ-bound protein, DnaK hydrolyzes its bound ATP, resulting in the formation of a stable complex. GrpE releases ADP from DnaK; ATP binding to DnaK triggers the release of the substrate protein, thus completing the reaction cycle. Several rounds of ATP-dependent interactions between DnaJ, DnaK and GrpE are required for fully efficient folding. This chain is Protein GrpE, found in Acidithiobacillus ferrooxidans (strain ATCC 23270 / DSM 14882 / CIP 104768 / NCIMB 8455) (Ferrobacillus ferrooxidans (strain ATCC 23270)).